The primary structure comprises 506 residues: Protein P7 (506 aa).

RNA-binding regions lie at residues 128-249 (ISYL…GKRE) and 325-355 (DGSY…FKIS).

This sequence belongs to the phytoreovirus protein P7 family.

Its subcellular location is the virion. It is found in the host cytoplasm. Probable component of the transcriptional machinery present in the inner capsid. Displays dsRNA binding activity and may play an important role in the sorting of viral RNA and virion assembly. Together with the RNA-directed RNA polymerase P1 and capping enzyme P5, forms an transcriptional complex positioned near the channels situated at each of the five-fold vertices of the core. The protein is Protein P7 of Alopecurus aequalis (Barnyard grass).